Here is a 140-residue protein sequence, read N- to C-terminus: Probable NADH dehydrogenase [ubiquinone] iron-sulfur protein 6, mitochondrial (140 aa).

It belongs to the complex I NDUFS6 subunit family. In terms of assembly, complex I is composed of 45 different subunits. This is a component of the iron-sulfur (IP) fragment of the enzyme.

It localises to the mitochondrion inner membrane. Functionally, accessory subunit of the mitochondrial membrane respiratory chain NADH dehydrogenase (Complex I), that is believed not to be involved in catalysis. Complex I functions in the transfer of electrons from NADH to the respiratory chain. The immediate electron acceptor for the enzyme is believed to be ubiquinone. This Caenorhabditis elegans protein is Probable NADH dehydrogenase [ubiquinone] iron-sulfur protein 6, mitochondrial (nduf-6).